Consider the following 505-residue polypeptide: UDP-N-acetylmuramate--L-alanine ligase (505 aa).

164-170 (GTHGKTT) serves as a coordination point for ATP.

This sequence belongs to the MurCDEF family.

The protein localises to the cytoplasm. The enzyme catalyses UDP-N-acetyl-alpha-D-muramate + L-alanine + ATP = UDP-N-acetyl-alpha-D-muramoyl-L-alanine + ADP + phosphate + H(+). It participates in cell wall biogenesis; peptidoglycan biosynthesis. Functionally, cell wall formation. In Synechocystis sp. (strain ATCC 27184 / PCC 6803 / Kazusa), this protein is UDP-N-acetylmuramate--L-alanine ligase.